The chain runs to 593 residues: Mono(ADP-ribosyl)transferase SpvB (593 aa).

A disordered region spans residues 361 to 384 (PVNNMMPPPPPPPPPMMGGNSSRP). Residues 366–376 (MPPPPPPPPPM) show a composition bias toward pro residues. One can recognise a TR mART core domain in the interval 375–578 (PMMGGNSSRP…LRLSDDATAD (204 aa)). Residues arginine 473, serine 503, and glutamate 540 contribute to the active site.

The protein belongs to the SpvB family.

It is found in the secreted. It catalyses the reaction L-arginyl-[protein] + NAD(+) = N(omega)-(ADP-D-ribosyl)-L-arginyl-[protein] + nicotinamide + H(+). In terms of biological role, mono-ADP-ribosylates muscle and non-muscle actin. ADP-ribosylates Chinese hamster ovary and HeLa cell actin as well as rabbit muscle, porcine heart actin and non-muscle beta- and gamma-actin. ADP-ribosylation of actin prevents the polymerization of G actin to F actin, causing actin filament depolymerization, destruction of the cytoskeleton and cytotoxicity; this requires only the C-terminal 120 residues. Does not possess NAD(+)-glycohydrolase activity, unlike most mART enzymes. This is Mono(ADP-ribosyl)transferase SpvB (spvB) from Salmonella dublin.